A 215-amino-acid chain; its full sequence is Ras-related protein Rab-14 (215 aa).

The residue at position 2 (alanine 2) is an N-acetylalanine. GTP is bound by residues glycine 21, valine 22, glycine 23, lysine 24, serine 25, cysteine 26, alanine 38, aspartate 39, cysteine 40, histidine 42, and threonine 43. Serine 25 contributes to the Mg(2+) binding site. The short motif at 42-47 (HTIGVE) is the Switch 1 element. Positions 43 and 66 each coordinate Mg(2+). The Switch 2 signature appears at 68 to 77 (AGQERFRAVT). GTP contacts are provided by glycine 69, asparagine 124, lysine 125, aspartate 127, alanine 155, and lysine 156. The segment at 188–215 (SGVQHKPSAPQGGRLTSEPQPQREGCGC) is disordered. 2 S-geranylgeranyl cysteine lipidation sites follow: cysteine 213 and cysteine 215. Cysteine 215 bears the Cysteine methyl ester mark.

Belongs to the small GTPase superfamily. Rab family. As to quaternary structure, interacts with ZFYVE20. Interacts with KIF16B. Interacts (GTP-bound form) with RUFY1; the interaction recruits RUFY1 onto endosomal membranes. Interacts (GTP-bound form) with RAB11FIP1 (via its C-terminus); the interactions doesn't mediate RAB11FIP1 rectruitment to membranes. Interacts with RAB11FIP2. Mg(2+) serves as cofactor.

The protein resides in the recycling endosome. It is found in the early endosome membrane. Its subcellular location is the golgi apparatus membrane. It localises to the golgi apparatus. The protein localises to the trans-Golgi network membrane. The protein resides in the cytoplasmic vesicle. It is found in the phagosome. The enzyme catalyses GTP + H2O = GDP + phosphate + H(+). Regulated by guanine nucleotide exchange factors (GEFs) including DENND6A and DENND6B which promote the exchange of bound GDP for free GTP. Regulated by GTPase activating proteins (GAPs) which increase the GTP hydrolysis activity. Inhibited by GDP dissociation inhibitors (GDIs) which prevent Rab-GDP dissociation. Its function is as follows. The small GTPases Rab are key regulators of intracellular membrane trafficking, from the formation of transport vesicles to their fusion with membranes. Rabs cycle between an inactive GDP-bound form and an active GTP-bound form that is able to recruit to membranes different set of downstream effectors directly responsible for vesicle formation, movement, tethering and fusion. Involved in membrane trafficking between the Golgi complex and endosomes during early embryonic development. Regulates the Golgi to endosome transport of FGFR-containing vesicles during early development, a key process for developing basement membrane and epiblast and primitive endoderm lineages during early postimplantation development. May act by modulating the kinesin KIF16B-cargo association to endosomes. Regulates, together with its guanine nucleotide exchange factor DENND6A, the specific endocytic transport of ADAM10, N-cadherin/CDH2 shedding and cell-cell adhesion. Mediates endosomal tethering and fusion through the interaction with RUFY1 and RAB4B. Interaction with RAB11FIP1 may function in the process of neurite formation. The polypeptide is Ras-related protein Rab-14 (RAB14) (Sus scrofa (Pig)).